The chain runs to 141 residues: Endoribonuclease YbeY (141 aa).

Positions 105, 109, and 115 each coordinate Zn(2+).

The protein belongs to the endoribonuclease YbeY family. It depends on Zn(2+) as a cofactor.

It localises to the cytoplasm. In terms of biological role, single strand-specific metallo-endoribonuclease involved in late-stage 70S ribosome quality control and in maturation of the 3' terminus of the 16S rRNA. This Karelsulcia muelleri (strain GWSS) (Sulcia muelleri) protein is Endoribonuclease YbeY.